We begin with the raw amino-acid sequence, 436 residues long: MSHEAVWQHVLEHIRRSITEVEFHTWFERIRPLGIRDGVLELAVPTSFALDWIRRHYAGLIQEALGLLGAQAPRFELRVVPGVVVQEDIFQAAPAEAPRPKLNPKYTFENFVVGPNNSMAHAAAVAVAESPGRAYNPLFIYGGVGLGKTHLMHAVGHSVAKRFPHLKIEYVSTETFTNELINAIREDRMTEFRERYRSVDLLLVDDVQFIAGKERTQEEFFHTFNALYEAHKQIILSSDRPPKDILTLEARLRSRFEWGLITDIQPPDLETRIAILKMNAEQRGLRIPEDALEYIARQVTSNIRELEGALMRAIAFASLNGVELTRAVAAKALSDIFAPRELEADPLEIIRKVADHFGLKPEELTGSGRKKEVVLPRQLAMYLVRELTRASLPEIGQLFGGRDHTTVLYAIQKVQELAESDREVQGLLRTLREACT.

The segment at Met1–Val80 is domain I, interacts with DnaA modulators. The domain II stretch occupies residues Val80–Pro100. The tract at residues Lys101 to Ala317 is domain III, AAA+ region. 4 residues coordinate ATP: Gly145, Gly147, Lys148, and Thr149. The domain IV, binds dsDNA stretch occupies residues Ser318–Thr436.

Belongs to the DnaA family. Oligomerizes as a right-handed, spiral filament on DNA at oriC.

It is found in the cytoplasm. In terms of biological role, plays an essential role in the initiation and regulation of chromosomal replication. ATP-DnaA binds to the origin of replication (oriC) to initiate formation of the DNA replication initiation complex once per cell cycle. Binds the DnaA box (a 9 base pair repeat at the origin) and separates the double-stranded (ds)DNA. Forms a right-handed helical filament on oriC DNA; dsDNA binds to the exterior of the filament while single-stranded (ss)DNA is stabiized in the filament's interior. The ATP-DnaA-oriC complex binds and stabilizes one strand of the AT-rich DNA unwinding element (DUE), permitting loading of DNA polymerase. After initiation quickly degrades to an ADP-DnaA complex that is not apt for DNA replication. Binds acidic phospholipids. This is Chromosomal replication initiator protein DnaA from Thermus thermophilus (strain ATCC BAA-163 / DSM 7039 / HB27).